Consider the following 1213-residue polypeptide: MLNGHVVNYGKHRTRRSFSRIKEVLKLPNLTDVQTESYKWFLDKGIKEVFDDIMPISDFSGKLSLEYVGYKLQKPKYTVDEARDHDATYAAPMHVTLKLTNQETGEIKTQDVFFGDLPLMTESGSFIVNGAERVIVSQLVRSPGVYYTGDYDKNGRQIFGTTVIPNRGAWLEYETDAKNVSYVRVDRTRKLPLTVLIRAMGIGSDSEIIEMFGQSDTLQFTLDKDVHKNPADSRVAEALKDIYERLRPGEPKTTDSSRSLLYARFFDPRRYDLAPVGRYKINKKLSLKNRLYGQTLAETLADPDTGEIIVKKDTVVTHEIMDKLAPYLDRDDFKMVTYQPSKEGVLPDPITVQEIKVYSKVDPEREVKLMSNGHIDADVKHLTPADVLASINYFFALQDKIGTTDDIDHLGNRRIRRVGELLQNQFRIGLARMERVVRERMSIQDPSTVTPQQLINIRPIVASIKEFFGSSQLSQFMDQHNPLGELTHKRRMSALGPGGLTRDRAGYEVRDVHYTHYGRLCPIETPEGPNIGLINSLASYAIINKYGFIETPYRRVSWDTHKVTDKIDYLTADEEDNYIIAGANTPLNDDGSFKEDIILARQKEDNVEVTPDKIDYMDVIPKQVVSVASACIPFLENDDSNRALMGANQQRQAAPLINPHSSLVGTGMEYRAAHDSGAALIAKAAGTVEYVDADEIRIRREDGTLDKYTLEKYRRSNNSKSYNQTPNVKLGDHVDESDVIANGPTMDHGELALGQNPLIAFMTWNMYNYEDAIMLSERLVKDDVYTSISIEDYESEARDTKLGPEEITRELPNIGEDALKDLDADGIVRVGAEVHDGDILVGKVTPKGVTELSAEERLLHAIFGEKAREVRDTSLRVPHGGGGIVQDVKVYTREAGDELSPGVNTMVRVYIAQKRKIQVGDKMSGRHGNKGTVAAVMPEEDMPYLPDGTPVDICLNPMGVPSRMNIGQLLELHLGAAARQLGIHVATPVFDGANENDVWDTVRQAGMDKDGKTVIYDGRTGEPFHNRVSVGVMHYLKLTHMVDDKIHARSIGPYSLVTQQPLGGKAQFGGQRFGEMEVWALEAYGAAYTLQEILTYKSDDVVGRVKAYEAIVKGERIPKPGVPESFRVLVKELQSLGLDIRVLDMDHNEIELRDMDEDSSEHLNIDTLSRMAEEQEKKKLAEETGKSENKEDSNETADKPVAPADESDGKVSK.

The interval 1153–1213 (RDMDEDSSEH…ADESDGKVSK (61 aa)) is disordered. Over residues 1171 to 1198 (MAEEQEKKKLAEETGKSENKEDSNETAD) the composition is skewed to basic and acidic residues.

The protein belongs to the RNA polymerase beta chain family. The RNAP catalytic core consists of 2 alpha, 1 beta, 1 beta' and 1 omega subunit. When a sigma factor is associated with the core the holoenzyme is formed, which can initiate transcription.

The catalysed reaction is RNA(n) + a ribonucleoside 5'-triphosphate = RNA(n+1) + diphosphate. Functionally, DNA-dependent RNA polymerase catalyzes the transcription of DNA into RNA using the four ribonucleoside triphosphates as substrates. The sequence is that of DNA-directed RNA polymerase subunit beta from Lactobacillus acidophilus (strain ATCC 700396 / NCK56 / N2 / NCFM).